A 556-amino-acid polypeptide reads, in one-letter code: Potassium-transporting ATPase potassium-binding subunit (556 aa).

A run of 10 helical transmembrane segments spans residues 1 to 21, 60 to 80, 130 to 150, 173 to 193, 245 to 265, 281 to 301, 374 to 394, 416 to 436, 482 to 502, and 529 to 549; these read MTWI…GIAQ, SYAR…YALQ, GLCV…VALI, LRIL…GGAV, PQPW…FSLP, ILAA…AAEF, GLYG…LLVG, ILVM…VPGL, AALG…ILAL, and LIVF…LTLG.

This sequence belongs to the KdpA family. The system is composed of three essential subunits: KdpA, KdpB and KdpC.

It localises to the cell membrane. In terms of biological role, part of the high-affinity ATP-driven potassium transport (or Kdp) system, which catalyzes the hydrolysis of ATP coupled with the electrogenic transport of potassium into the cytoplasm. This subunit binds the extracellular potassium ions and delivers the ions to the membrane domain of KdpB through an intramembrane tunnel. The chain is Potassium-transporting ATPase potassium-binding subunit from Cutibacterium acnes (strain DSM 16379 / KPA171202) (Propionibacterium acnes).